A 239-amino-acid chain; its full sequence is MDYVKGIFKNRPNRFIAEVEVDGKIEIAHVPNTGRCKELLVDGAAVYLKPSDNPKRKTRFTLHFVVNKGELVSLYSQEANSIVYDAILDGKIKELQGYSYHQREKQVDDSRIDIYLANQEDDCCGMEFLVDSCYIEVKGVTLIVDGEARFPDAPTERGAKHLKELIKLKNDGNRAVVFFLIQHPAGNDFRPNWENDPKFSQTLVEAENAGVEILVYKCNNTLEGIELVPKSLDYDLSRK.

This sequence belongs to the SfsA family.

The polypeptide is Sugar fermentation stimulation protein homolog (Methanobrevibacter smithii (strain ATCC 35061 / DSM 861 / OCM 144 / PS)).